The chain runs to 396 residues: Peptide chain release factor 1, mitochondrial (396 aa).

N5-methylglutamine is present on Gln-268. A disordered region spans residues 317 to 340 (LEKEEKERNARKDQVSTTDRSDKI).

The protein belongs to the prokaryotic/mitochondrial release factor family. In terms of processing, methylation of glutamine in the GGQ triplet is conserved from bacteria to mammals.

The protein localises to the mitochondrion. In terms of biological role, mitochondrial peptide chain release factor that directs the termination of translation in response to the peptide chain termination codons UAA and UAG. The chain is Peptide chain release factor 1, mitochondrial (MRF1) from Kluyveromyces lactis (strain ATCC 8585 / CBS 2359 / DSM 70799 / NBRC 1267 / NRRL Y-1140 / WM37) (Yeast).